The primary structure comprises 701 residues: Elongation factor G (701 aa).

In terms of domain architecture, tr-type G spans 10 to 290 (AKVRNIGIMA…AVVDYLPSPL (281 aa)). GTP is bound by residues 19–26 (AHIDAGKT), 83–87 (DTPGH), and 137–140 (NKMD).

This sequence belongs to the TRAFAC class translation factor GTPase superfamily. Classic translation factor GTPase family. EF-G/EF-2 subfamily.

The protein resides in the cytoplasm. Its function is as follows. Catalyzes the GTP-dependent ribosomal translocation step during translation elongation. During this step, the ribosome changes from the pre-translocational (PRE) to the post-translocational (POST) state as the newly formed A-site-bound peptidyl-tRNA and P-site-bound deacylated tRNA move to the P and E sites, respectively. Catalyzes the coordinated movement of the two tRNA molecules, the mRNA and conformational changes in the ribosome. The protein is Elongation factor G of Tropheryma whipplei (strain Twist) (Whipple's bacillus).